A 156-amino-acid chain; its full sequence is Small ribosomal subunit protein uS7 (156 aa).

Belongs to the universal ribosomal protein uS7 family. In terms of assembly, part of the 30S ribosomal subunit. Contacts proteins S9 and S11.

Functionally, one of the primary rRNA binding proteins, it binds directly to 16S rRNA where it nucleates assembly of the head domain of the 30S subunit. Is located at the subunit interface close to the decoding center, probably blocks exit of the E-site tRNA. The sequence is that of Small ribosomal subunit protein uS7 from Allorhizobium ampelinum (strain ATCC BAA-846 / DSM 112012 / S4) (Agrobacterium vitis (strain S4)).